A 695-amino-acid polypeptide reads, in one-letter code: Putative pentatricopeptide repeat-containing protein At1g77010, mitochondrial (695 aa).

Residues 1 to 64 (MILKYNSSYR…KGFLSSIVIV (64 aa)) constitute a mitochondrion transit peptide. PPR repeat units follow at residues 61-91 (IVIVANHLLQMYSRSGKMGIARNLFDEMPDR), 92-122 (NYFSWNTMIEGYMNSGEKGTSLRFFDMMPER), 123-157 (DGYSWNVVVSGFAKAGELSVARRLFNAMPEKDVVT), 159-184 (NSLLHGYILNGYAEEALRLFKELNFS), 186-220 (DAITLTTVLKACAELEALKCGKQIHAQILIGGVEC), 221-251 (DSKMNSSLVNVYAKCGDLRMASYMLEQIREP), 252-282 (DDHSLSALISGYANCGRVNESRGLFDRKSNR), 283-313 (CVILWNSMISGYIANNMKMEALVLFNEMRNE), 317-351 (DSRTLAAVINACIGLGFLETGKQMHCHACKFGLID), 352-382 (DIVVASTLLDMYSKCGSPMEACKLFSEVESY), 383-417 (DTILLNSMIKVYFSCGRIDDAKRVFERIENKSLIS), 418-448 (WNSMTNGFSQNGCTVETLEYFHQMHKLDLPT), 449-483 (DEVSLSSVISACASISSLELGEQVFARATIVGLDS), 484-514 (DQVVSSSLIDLYCKCGFVEHGRRVFDTMVKS), 515-549 (DEVPWNSMISGYATNGQGFEAIDLFKKMSVAGIRP), 550-585 (TQITFMVVLTACNYCGLVEEGRKLFESMKVDHGFVP), and 586-616 (DKEHFSCMVDLLARAGYVEEAINLVEEMPFD). The segment at 621–695 (MWSSILRGCV…KNPGSSWTDC (75 aa)) is type E motif; degenerate.

This sequence belongs to the PPR family. PCMP-E subfamily.

It localises to the mitochondrion. The protein is Putative pentatricopeptide repeat-containing protein At1g77010, mitochondrial (PCMP-E5) of Arabidopsis thaliana (Mouse-ear cress).